The primary structure comprises 160 residues: Phosphopantetheine adenylyltransferase (160 aa).

Ser9 lines the substrate pocket. Residues 9–10 (SF) and His17 each bind ATP. Substrate is bound by residues Lys41, Thr73, and Arg87. Residues 88–90 (GMR), Glu98, and 123–129 (YTFFSSS) each bind ATP.

Belongs to the bacterial CoaD family. In terms of assembly, homohexamer. It depends on Mg(2+) as a cofactor.

The protein localises to the cytoplasm. It carries out the reaction (R)-4'-phosphopantetheine + ATP + H(+) = 3'-dephospho-CoA + diphosphate. It functions in the pathway cofactor biosynthesis; coenzyme A biosynthesis; CoA from (R)-pantothenate: step 4/5. Reversibly transfers an adenylyl group from ATP to 4'-phosphopantetheine, yielding dephospho-CoA (dPCoA) and pyrophosphate. The sequence is that of Phosphopantetheine adenylyltransferase from Roseiflexus sp. (strain RS-1).